A 68-amino-acid chain; its full sequence is Alpha-conotoxin-like Mr1.2 (68 aa).

The N-terminal stretch at 1–21 (MGMRMMFTVFLLVVLATTVVS) is a signal peptide. Positions 22–48 (FTSDRGSDGRNAAAKDKASDLVALTVK) are excised as a propeptide. Intrachain disulfides connect cysteine 50/cysteine 56 and cysteine 51/cysteine 64. The tract at residues 52-54 (SNP) is ser-Xaa-Pro motif, crucial for potent interaction with nAChR. Asparagine 65 carries the asparagine amide modification.

This sequence belongs to the conotoxin A superfamily. In terms of tissue distribution, expressed by the venom duct.

Its subcellular location is the secreted. Its function is as follows. Alpha-conotoxins act on postsynaptic membranes, they bind to the nicotinic acetylcholine receptors (nAChR) and thus inhibit them. This is Alpha-conotoxin-like Mr1.2 from Conus marmoreus (Marble cone).